The chain runs to 331 residues: Ketol-acid reductoisomerase (NADP(+)) (331 aa).

The region spanning 2–182 (AKIYTDKDAS…GATRAGVIET (181 aa)) is the KARI N-terminal Rossmann domain. NADP(+) contacts are provided by residues 25-28 (YGIQ), Arg-48, Ser-53, and 83-86 (DMEQ). Residue His-108 is part of the active site. Residue Gly-134 coordinates NADP(+). The KARI C-terminal knotted domain maps to 183–328 (TFAEETETDL…AEMRKLLFGR (146 aa)). Mg(2+)-binding residues include Asp-191, Glu-195, Glu-227, and Glu-231. Ser-252 serves as a coordination point for substrate.

This sequence belongs to the ketol-acid reductoisomerase family. Mg(2+) is required as a cofactor.

It catalyses the reaction (2R)-2,3-dihydroxy-3-methylbutanoate + NADP(+) = (2S)-2-acetolactate + NADPH + H(+). It carries out the reaction (2R,3R)-2,3-dihydroxy-3-methylpentanoate + NADP(+) = (S)-2-ethyl-2-hydroxy-3-oxobutanoate + NADPH + H(+). The protein operates within amino-acid biosynthesis; L-isoleucine biosynthesis; L-isoleucine from 2-oxobutanoate: step 2/4. Its pathway is amino-acid biosynthesis; L-valine biosynthesis; L-valine from pyruvate: step 2/4. Involved in the biosynthesis of branched-chain amino acids (BCAA). Catalyzes an alkyl-migration followed by a ketol-acid reduction of (S)-2-acetolactate (S2AL) to yield (R)-2,3-dihydroxy-isovalerate. In the isomerase reaction, S2AL is rearranged via a Mg-dependent methyl migration to produce 3-hydroxy-3-methyl-2-ketobutyrate (HMKB). In the reductase reaction, this 2-ketoacid undergoes a metal-dependent reduction by NADPH to yield (R)-2,3-dihydroxy-isovalerate. The protein is Ketol-acid reductoisomerase (NADP(+)) of Pyrobaculum islandicum (strain DSM 4184 / JCM 9189 / GEO3).